Here is a 484-residue protein sequence, read N- to C-terminus: Transmembrane protein 161B (484 aa).

A helical transmembrane segment spans residues 108–128 (LVDFTVAATVVYLITELYFCV). N136 carries an N-linked (GlcNAc...) asparagine glycan. A run of 2 helical transmembrane segments spans residues 137-157 (ISVV…FSLT) and 170-190 (SLCI…LIVT). Residue N204 is glycosylated (N-linked (GlcNAc...) asparagine). A run of 4 helical transmembrane segments spans residues 229 to 249 (FKLI…FPGL), 266 to 286 (VTQT…LLWV), 368 to 388 (VFYY…MLLH), and 456 to 476 (LSFF…FGLF).

This sequence belongs to the TMEM161 family.

It is found in the cell membrane. Essential for maintaining normal cardiac rhythm in the developing heart and for neonatal survival. Inhibits potassium and calcium currents in the cardiomyocytes, this assists in timely action potential repolarization and thereby maintains normal cardiac rhythm. This chain is Transmembrane protein 161B (tmem161b), found in Danio rerio (Zebrafish).